The sequence spans 81 residues: Translational regulator CsrA (81 aa).

The segment covering 59–71 has biased composition (polar residues); the sequence is SQMQHLEQGNFPT. A disordered region spans residues 59 to 81; it reads SQMQHLEQGNFPTSFDDDDFFNR.

The protein belongs to the CsrA/RsmA family. As to quaternary structure, homodimer; the beta-strands of each monomer intercalate to form a hydrophobic core, while the alpha-helices form wings that extend away from the core.

It is found in the cytoplasm. A key translational regulator that binds mRNA to regulate translation initiation and/or mRNA stability. Mediates global changes in gene expression, shifting from rapid growth to stress survival by linking envelope stress, the stringent response and the catabolite repression systems. Usually binds in the 5'-UTR; binding at or near the Shine-Dalgarno sequence prevents ribosome-binding, repressing translation, binding elsewhere in the 5'-UTR can activate translation and/or stabilize the mRNA. Its function is antagonized by small RNA(s). In Psychrobacter sp. (strain PRwf-1), this protein is Translational regulator CsrA.